We begin with the raw amino-acid sequence, 216 residues long: Octanoyltransferase (216 aa).

Residues 35-213 (NSNPDFIWIG…TIEEEFNFDF (179 aa)) enclose the BPL/LPL catalytic domain. Substrate-binding positions include 77-84 (RGGEVTCH), 144-146 (SIG), and 157-159 (GFS). Residue Cys175 is the Acyl-thioester intermediate of the active site.

This sequence belongs to the LipB family.

The protein resides in the cytoplasm. The catalysed reaction is octanoyl-[ACP] + L-lysyl-[protein] = N(6)-octanoyl-L-lysyl-[protein] + holo-[ACP] + H(+). It functions in the pathway protein modification; protein lipoylation via endogenous pathway; protein N(6)-(lipoyl)lysine from octanoyl-[acyl-carrier-protein]: step 1/2. Its function is as follows. Catalyzes the transfer of endogenously produced octanoic acid from octanoyl-acyl-carrier-protein onto the lipoyl domains of lipoate-dependent enzymes. Lipoyl-ACP can also act as a substrate although octanoyl-ACP is likely to be the physiological substrate. The polypeptide is Octanoyltransferase (Prochlorococcus marinus (strain MIT 9301)).